The primary structure comprises 356 residues: Glutenin, low molecular weight subunit (356 aa).

Residues 1-19 (MKTFLVFALLALAAASAVA) form the signal peptide. The segment at 20–179 (QISQQQQAPP…LQQQRPPFSR (160 aa)) is disordered.

Belongs to the gliadin/glutenin family. As to quaternary structure, disulfide-bridge linked aggregates.

In terms of biological role, glutenins are high-molecular weight seed storage proteins of wheat endosperm. Thought to be responsible for the visco-elastic property of wheat dough. The polypeptide is Glutenin, low molecular weight subunit (Triticum aestivum (Wheat)).